The primary structure comprises 252 residues: Flavin-dependent thymidylate synthase (252 aa).

One can recognise a ThyX domain in the interval 7–235 (LDVQLVACST…PTVFSDFETS (229 aa)). DUMP-binding positions include 94-97 (ELVR), 105-109 (QLSQR), and R174. Residues 97–99 (RHR) and Q105 each bind FAD. Positions 97 to 107 (RHRHFSFSQLS) match the ThyX motif motif. FAD is bound by residues 190–192 (NFR) and H196. R201 contacts dUMP. Catalysis depends on R201, which acts as the Involved in ionization of N3 of dUMP, leading to its activation.

This sequence belongs to the thymidylate synthase ThyX family. As to quaternary structure, homotetramer. Requires FAD as cofactor.

The catalysed reaction is dUMP + (6R)-5,10-methylene-5,6,7,8-tetrahydrofolate + NADPH + H(+) = dTMP + (6S)-5,6,7,8-tetrahydrofolate + NADP(+). It functions in the pathway pyrimidine metabolism; dTTP biosynthesis. Its function is as follows. Catalyzes the reductive methylation of 2'-deoxyuridine-5'-monophosphate (dUMP) to 2'-deoxythymidine-5'-monophosphate (dTMP) while utilizing 5,10-methylenetetrahydrofolate (mTHF) as the methyl donor, and NADPH and FADH(2) as the reductant. The sequence is that of Flavin-dependent thymidylate synthase from Corynebacterium diphtheriae (strain ATCC 700971 / NCTC 13129 / Biotype gravis).